Consider the following 714-residue polypeptide: Fatty acid oxidation complex subunit alpha (714 aa).

Residues 1–190 (MEMASAFTLN…KLGLVDDVVP (190 aa)) form an enoyl-CoA hydratase region. The interval 306-714 (APLNSVGILG…FWKTTATDLQ (409 aa)) is 3-hydroxyacyl-CoA dehydrogenase.

In the N-terminal section; belongs to the enoyl-CoA hydratase/isomerase family. The protein in the central section; belongs to the 3-hydroxyacyl-CoA dehydrogenase family. Heterotetramer of two alpha chains (FadJ) and two beta chains (FadI).

The protein localises to the cytoplasm. The catalysed reaction is a (3S)-3-hydroxyacyl-CoA = a (2E)-enoyl-CoA + H2O. The enzyme catalyses a 4-saturated-(3S)-3-hydroxyacyl-CoA = a (3E)-enoyl-CoA + H2O. It carries out the reaction a (3S)-3-hydroxyacyl-CoA + NAD(+) = a 3-oxoacyl-CoA + NADH + H(+). It catalyses the reaction (3S)-3-hydroxybutanoyl-CoA = (3R)-3-hydroxybutanoyl-CoA. It participates in lipid metabolism; fatty acid beta-oxidation. Functionally, catalyzes the formation of a hydroxyacyl-CoA by addition of water on enoyl-CoA. Also exhibits 3-hydroxyacyl-CoA epimerase and 3-hydroxyacyl-CoA dehydrogenase activities. The chain is Fatty acid oxidation complex subunit alpha from Escherichia coli O6:K15:H31 (strain 536 / UPEC).